The primary structure comprises 784 residues: E3 UFM1-protein ligase 1 homolog (784 aa).

Residues 401–481 (QKGNSSAQDL…GGGGGGNKKT (81 aa)) are disordered.

This sequence belongs to the UFL1 family.

E3 UFM1-protein ligase that mediates ufmylation of target proteins. In Drosophila ananassae (Fruit fly), this protein is E3 UFM1-protein ligase 1 homolog.